Reading from the N-terminus, the 521-residue chain is Maturase K (521 aa).

The protein belongs to the intron maturase 2 family. MatK subfamily.

The protein localises to the plastid. Its subcellular location is the chloroplast. Its function is as follows. Usually encoded in the trnK tRNA gene intron. Probably assists in splicing its own and other chloroplast group II introns. The sequence is that of Maturase K from Kniphofia uvaria (Red-hot poker).